The chain runs to 435 residues: Tol-Pal system protein TolB (435 aa).

Residues 1-20 form the signal peptide; the sequence is MRKIIAGVFIFVFLISNLYA.

The protein belongs to the TolB family. The Tol-Pal system is composed of five core proteins: the inner membrane proteins TolA, TolQ and TolR, the periplasmic protein TolB and the outer membrane protein Pal. They form a network linking the inner and outer membranes and the peptidoglycan layer.

It localises to the periplasm. Functionally, part of the Tol-Pal system, which plays a role in outer membrane invagination during cell division and is important for maintaining outer membrane integrity. The sequence is that of Tol-Pal system protein TolB from Francisella tularensis subsp. tularensis (strain WY96-3418).